Here is a 753-residue protein sequence, read N- to C-terminus: Polyadenylate-binding protein, cytoplasmic and nuclear (753 aa).

Over residues 1-26 (MSAEVSTTPAADNTVNGTPEATNAAA) the composition is skewed to polar residues. The interval 1 to 52 (MSAEVSTTPAADNTVNGTPEATNAAATSAPEVTAVESASPSTTPSASQPHSA) is disordered. A compositionally biased stretch (low complexity) spans 37-52 (SASPSTTPSASQPHSA). 4 RRM domains span residues 52–130 (ASLY…WSQR), 140–217 (GNVF…HHIS), 233–310 (TNVY…RAQK), and 336–460 (VNLY…LAQR). Disordered regions lie at residues 367 to 417 (VMRD…TEKK) and 602 to 645 (MGQG…REEV). A compositionally biased stretch (basic and acidic residues) spans 379–417 (ESEKEKEKESNKENEKEGEEKTEEKPKESEEEPKKTEKK). Positions 605-631 (GIRGPGYGQGRGGAPVQGGPRPQGGRG) are enriched in gly residues. Residues 648-725 (TGGLTAQTLS…ALSVYDEYMK (78 aa)) enclose the PABC domain. The tract at residues 728-753 (GEGEAPAESAKPKEDAAETATEENKS) is disordered. Residues 737–753 (AKPKEDAAETATEENKS) are compositionally biased toward basic and acidic residues.

Belongs to the polyadenylate-binding protein type-1 family.

Its subcellular location is the cytoplasm. It localises to the nucleus. Binds the poly(A) tail of mRNA. Appears to be an important mediator of the multiple roles of the poly(A) tail in mRNA biogenesis, stability and translation. In the nucleus, involved in both mRNA cleavage and polyadenylation. Is also required for efficient mRNA export to the cytoplasm. Acts in concert with a poly(A)-specific nuclease (PAN) to affect poly(A) tail shortening, which may occur concomitantly with either nucleocytoplasmic mRNA transport or translational initiation. In the cytoplasm, stimulates translation initiation and regulates mRNA decay through translation termination-coupled poly(A) shortening, probably mediated by PAN. The chain is Polyadenylate-binding protein, cytoplasmic and nuclear (pab1) from Aspergillus fumigatus (strain ATCC MYA-4609 / CBS 101355 / FGSC A1100 / Af293) (Neosartorya fumigata).